The primary structure comprises 495 residues: ATP synthase subunit alpha, chloroplastic (495 aa).

170-177 (GDRQTGKT) contacts ATP.

The protein belongs to the ATPase alpha/beta chains family. In terms of assembly, F-type ATPases have 2 components, CF(1) - the catalytic core - and CF(0) - the membrane proton channel. CF(1) has five subunits: alpha(3), beta(3), gamma(1), delta(1), epsilon(1). CF(0) has four main subunits: a, b, b' and c.

Its subcellular location is the plastid. The protein resides in the chloroplast thylakoid membrane. The catalysed reaction is ATP + H2O + 4 H(+)(in) = ADP + phosphate + 5 H(+)(out). Produces ATP from ADP in the presence of a proton gradient across the membrane. The alpha chain is a regulatory subunit. The protein is ATP synthase subunit alpha, chloroplastic of Cyanidioschyzon merolae (strain NIES-3377 / 10D) (Unicellular red alga).